A 242-amino-acid polypeptide reads, in one-letter code: Carboxy-S-adenosyl-L-methionine synthase (242 aa).

S-adenosyl-L-methionine-binding positions include tyrosine 39, 64 to 66 (GCS), 89 to 90 (DN), 117 to 118 (DI), asparagine 132, and arginine 199.

Belongs to the class I-like SAM-binding methyltransferase superfamily. Cx-SAM synthase family. As to quaternary structure, homodimer.

The enzyme catalyses prephenate + S-adenosyl-L-methionine = carboxy-S-adenosyl-L-methionine + 3-phenylpyruvate + H2O. Catalyzes the conversion of S-adenosyl-L-methionine (SAM) to carboxy-S-adenosyl-L-methionine (Cx-SAM). This Psychromonas ingrahamii (strain DSM 17664 / CCUG 51855 / 37) protein is Carboxy-S-adenosyl-L-methionine synthase.